A 426-amino-acid chain; its full sequence is Serine--tRNA ligase (426 aa).

231–233 (TSE) contributes to the L-serine binding site. 262–264 (RSE) serves as a coordination point for ATP. Position 285 (Glu285) interacts with L-serine. 349–352 (EISS) lines the ATP pocket. Ser385 lines the L-serine pocket.

The protein belongs to the class-II aminoacyl-tRNA synthetase family. Type-1 seryl-tRNA synthetase subfamily. In terms of assembly, homodimer. The tRNA molecule binds across the dimer.

The protein resides in the cytoplasm. It carries out the reaction tRNA(Ser) + L-serine + ATP = L-seryl-tRNA(Ser) + AMP + diphosphate + H(+). The enzyme catalyses tRNA(Sec) + L-serine + ATP = L-seryl-tRNA(Sec) + AMP + diphosphate + H(+). It functions in the pathway aminoacyl-tRNA biosynthesis; selenocysteinyl-tRNA(Sec) biosynthesis; L-seryl-tRNA(Sec) from L-serine and tRNA(Sec): step 1/1. Catalyzes the attachment of serine to tRNA(Ser). Is also able to aminoacylate tRNA(Sec) with serine, to form the misacylated tRNA L-seryl-tRNA(Sec), which will be further converted into selenocysteinyl-tRNA(Sec). The chain is Serine--tRNA ligase from Legionella pneumophila (strain Corby).